The following is a 257-amino-acid chain: tRNA (cytidine/uridine/adenosine-2'-O-)-methyltransferase TrmJ (257 aa).

S-adenosyl-L-methionine-binding positions include 79-82 (TSAR), 115-117 (GRE), I135, and 142-144 (GSL).

The protein belongs to the class IV-like SAM-binding methyltransferase superfamily. RNA methyltransferase TrmH family. Homodimer.

It localises to the cytoplasm. The catalysed reaction is cytidine(32) in tRNA + S-adenosyl-L-methionine = 2'-O-methylcytidine(32) in tRNA + S-adenosyl-L-homocysteine + H(+). The enzyme catalyses uridine(32) in tRNA + S-adenosyl-L-methionine = 2'-O-methyluridine(32) in tRNA + S-adenosyl-L-homocysteine + H(+). It carries out the reaction adenosine(32) in tRNA + S-adenosyl-L-methionine = 2'-O-methyladenosine(32) in tRNA + S-adenosyl-L-homocysteine + H(+). In terms of biological role, catalyzes the formation of 2'O-methylated cytidine (Cm32), 2'O-methylated uridine (Um32) or 2'O-methylated adenosine (Am32) at position 32 in tRNA. Confers resistance to oxidative stress. In Pseudomonas aeruginosa (strain UCBPP-PA14), this protein is tRNA (cytidine/uridine/adenosine-2'-O-)-methyltransferase TrmJ.